The chain runs to 564 residues: H/ACA ribonucleoprotein complex non-core subunit NAF1 (564 aa).

Disordered stretches follow at residues 1 to 29 (MESE…ELGK), 108 to 218 (LVVQ…DSEG), 238 to 264 (DEDD…KVRG), 387 to 489 (ASWE…HPSY), and 538 to 564 (PHMY…PPPS). Over residues 146 to 157 (ASGLSLLAAYSS) the composition is skewed to low complexity. Positions 238–249 (DEDDEDFDEDGA) are enriched in acidic residues. Thr250 carries the post-translational modification Phosphothreonine. Residue Ser254 is modified to Phosphoserine. The span at 388–402 (SWEHDVEPPARYVDH) shows a compositional bias: basic and acidic residues. Position 403 is a phosphoserine (Ser403). Over residues 426-446 (STDSVDTVTSVATTATKASSV) the composition is skewed to low complexity. Position 427 is a phosphothreonine (Thr427). Phosphoserine is present on Ser429. Thr432 is subject to Phosphothreonine. The span at 468-489 (PSINQHNQNQPQDEQYNFHPSY) shows a compositional bias: polar residues. Pro residues predominate over residues 538 to 553 (PHMYPPPPPFAPPPPN). A compositionally biased stretch (polar residues) spans 554–564 (NQSHQGQPPPS).

It belongs to the NAF1 family. During assembly of the complex, component of the box H/ACA small nucleolar ribonucleoprotein (H/ACA snoRNP) complex.

Its subcellular location is the nucleus. Its function is as follows. RNA-binding protein required for the maturation of the box H/ACA small nucleolar ribonucleoprotein (H/ACA snoRNP) complex and ribosome biogenesis. During assembly of the H/ACA snoRNP complex it associates with the complex and dissociates during complex maturation, becoming replaced by Gar1 to yield mature H/ACA snoRNP complex. The polypeptide is H/ACA ribonucleoprotein complex non-core subunit NAF1 (Drosophila melanogaster (Fruit fly)).